The primary structure comprises 1014 residues: Klotho (1014 aa).

The first 35 residues, 1–35, serve as a signal peptide directing secretion; that stretch reads MPASAPPRRPRPPPPSLSLSLLLVLLGLAGRRLRA. Residues 36-983 lie on the Extracellular side of the membrane; sequence EPGDGAQTWA…ECSFFHTRKP (948 aa). Glycosyl hydrolase-1 stretches follow at residues 59 to 508 and 517 to 955; these read FQGT…KNGF and LEGT…SNGF. Residues asparagine 161, asparagine 285, asparagine 346, asparagine 609, asparagine 614, and asparagine 696 are each glycosylated (N-linked (GlcNAc...) asparagine). A helical membrane pass occupies residues 984-1004; the sequence is LVAFIAFLFFAFIVSLSLIFY. Residues 1005–1014 lie on the Cytoplasmic side of the membrane; that stretch reads YSKKGRRRYQ.

It belongs to the glycosyl hydrolase 1 family. Klotho subfamily. Homodimer. Interacts with FGF23 and FGFR1.

It localises to the cell membrane. It is found in the apical cell membrane. The protein localises to the secreted. The enzyme catalyses a beta-D-glucuronoside + H2O = D-glucuronate + an alcohol. Functionally, may have weak glycosidase activity towards glucuronylated steroids. However, it lacks essential active site Glu residues at positions 241 and 874, suggesting it may be inactive as a glycosidase in vivo. May be involved in the regulation of calcium and phosphorus homeostasis by inhibiting the synthesis of active vitamin D. Essential factor for the specific interaction between FGF23 and FGFR1. In terms of biological role, the Klotho peptide generated by cleavage of the membrane-bound isoform may be an anti-aging circulating hormone which would extend life span by inhibiting insulin/IGF1 signaling. The sequence is that of Klotho (KL) from Macaca fascicularis (Crab-eating macaque).